The primary structure comprises 209 residues: Ubiquitin-conjugating enzyme E2 S (209 aa).

Residues 14–160 (QTIRQVMREL…ARMMTEIHAQ (147 aa)) form the UBC core domain. Cys98 functions as the Glycyl thioester intermediate in the catalytic mechanism. A disordered region spans residues 165–209 (GVGATGDAKDDGGPSTKKHAGLDKKLQDKKKEKLLKEKKRMLKRL). The segment covering 184 to 199 (AGLDKKLQDKKKEKLL) has biased composition (basic and acidic residues). A compositionally biased stretch (basic residues) spans 200-209 (KEKKRMLKRL).

Belongs to the ubiquitin-conjugating enzyme family.

It carries out the reaction S-ubiquitinyl-[E1 ubiquitin-activating enzyme]-L-cysteine + [E2 ubiquitin-conjugating enzyme]-L-cysteine = [E1 ubiquitin-activating enzyme]-L-cysteine + S-ubiquitinyl-[E2 ubiquitin-conjugating enzyme]-L-cysteine.. It participates in protein modification; protein ubiquitination. Its function is as follows. Catalyzes the covalent attachment of ubiquitin to other proteins. Acts as an essential factor of the anaphase promoting complex/cyclosome (APC/C), a cell cycle-regulated ubiquitin ligase that controls progression through mitosis. Acts by specifically elongating polyubiquitin chains initiated by the E2 enzyme vih/UbcH10 on APC/C substrates, enhancing the degradation of APC/C substrates by the proteasome and promoting mitotic exit. This is Ubiquitin-conjugating enzyme E2 S from Drosophila simulans (Fruit fly).